The sequence spans 132 residues: Fluoride-specific ion channel FluC (132 aa).

4 helical membrane passes run 5 to 25 (LYIALGGALGSVGRFALSGLV), 32 to 52 (TFPWGTLVVNVVGSFIIGFFA), 70 to 90 (FVMTGVLGGFTTFSSFSLQTL), and 105 to 125 (VVGSLVLCLVAVWLGHIAAVG). The Na(+) site is built by Gly77 and Thr80.

Belongs to the fluoride channel Fluc/FEX (TC 1.A.43) family.

It is found in the cell inner membrane. The enzyme catalyses fluoride(in) = fluoride(out). Its activity is regulated as follows. Na(+) is not transported, but it plays an essential structural role and its presence is essential for fluoride channel function. In terms of biological role, fluoride-specific ion channel. Important for reducing fluoride concentration in the cell, thus reducing its toxicity. The sequence is that of Fluoride-specific ion channel FluC from Opitutus terrae (strain DSM 11246 / JCM 15787 / PB90-1).